Here is a 1014-residue protein sequence, read N- to C-terminus: Poly [ADP-ribose] polymerase 1 (1014 aa).

The residue at position 2 (Ala2) is an N-acetylalanine. The PARP-type 1 zinc-finger motif lies at 9 to 93; the sequence is YRVEYAKSGR…KVKKTAEAGG (85 aa). 2 residues coordinate Zn(2+): Cys21 and Cys24. Phosphoserine is present on Ser41. The Zn(2+) site is built by His53 and Cys56. N6-acetyllysine occurs at positions 97 and 105. A PARP-type 2 zinc finger spans residues 113–203; the sequence is FAAEYAKSNR…ALKKQLPGVK (91 aa). Zn(2+) contacts are provided by Cys125 and Cys128. At Lys131 the chain carries N6-acetyllysine. Zn(2+)-binding residues include His159 and Cys162. Phosphoserine is present on residues Ser177, Ser179, and Ser185. Lys192 is covalently cross-linked (Glycyl lysine isopeptide (Lys-Gly) (interchain with G-Cter in SUMO2)). A disordered region spans residues 198 to 233; it reads QLPGVKSEGKRKGDEVDGVDEVAKKKSKKEKDKDSK. Lys203 participates in a covalent cross-link: Glycyl lysine isopeptide (Lys-Gly) (interchain with G-Cter in SUMO1); alternate. Residue Lys203 forms a Glycyl lysine isopeptide (Lys-Gly) (interchain with G-Cter in SUMO2); alternate linkage. Over residues 204-233 the composition is skewed to basic and acidic residues; sequence SEGKRKGDEVDGVDEVAKKKSKKEKDKDSK. 2 short sequence motifs (nuclear localization signal) span residues 207 to 209 and 221 to 226; these read KRK and KKKSKK. Positions 225–359 constitute a PADR1 zinc-binding domain; it reads KKEKDKDSKL…VKKQDRIFPP (135 aa). Lys249 participates in a covalent cross-link: Glycyl lysine isopeptide (Lys-Gly) (interchain with G-Cter in SUMO2). Residues Ser274 and Ser277 each carry the phosphoserine modification. A zinc ribbon region spans residues 290–332; sequence GALLPCEECSGQLVFKSDAYYCTGDVTAWTKCMVKTQTPNRKE. Zn(2+) is bound by residues Cys295, Cys298, Cys311, and Cys321. Positions 361 to 385 are disordered; that stretch reads TSASVAATPPPSTASAPAAVNSSAS. Ser364 bears the Phosphoserine mark. Thr368 is subject to Phosphothreonine. The segment at 373–524 is automodification domain; it reads TASAPAAVNS…GINKSEKRMK (152 aa). The BRCT domain occupies 385-476; the sequence is SADKPLSNMK…KSLQELFLAH (92 aa). Asp387 carries the polyADP-ribosyl aspartic acid modification. PolyADP-ribosyl glutamic acid occurs at positions 407, 413, 435, 437, 444, 445, 448, and 456. Residue Lys467 forms a Glycyl lysine isopeptide (Lys-Gly) (interchain with G-Cter in SUMO2) linkage. 2 positions are modified to polyADP-ribosyl glutamic acid: Glu471 and Glu484. Residue Lys486 forms a Glycyl lysine isopeptide (Lys-Gly) (interchain with G-Cter in SUMO1); alternate linkage. Residue Lys486 forms a Glycyl lysine isopeptide (Lys-Gly) (interchain with G-Cter in SUMO2); alternate linkage. PolyADP-ribosyl glutamic acid is present on residues Glu488 and Glu491. ADP-ribosylserine is present on residues Ser499, Ser504, and Ser507. Residue Lys512 forms a Glycyl lysine isopeptide (Lys-Gly) (interchain with G-Cter in SUMO2) linkage. A polyADP-ribosyl glutamic acid mark is found at Glu513 and Glu514. At Ser519 the chain carries ADP-ribosylserine. The residue at position 520 (Glu520) is a PolyADP-ribosyl glutamic acid. Lys521 bears the N6-(ADP-ribosyl)lysine mark. A Glycyl lysine isopeptide (Lys-Gly) (interchain with G-Cter in SUMO2) cross-link involves residue Lys528. The WGR domain maps to 542–638; that stretch reads SAHVLEKGGK…KNFTKYPKKF (97 aa). Position 594 is a phosphothreonine; by PRKDC (Thr594). An N6-acetyllysine mark is found at Lys600 and Lys621. The region spanning 662–779 is the PARP alpha-helical domain; sequence KSKLPKPVQD…DIEVAYSLLR (118 aa). Lys748 is covalently cross-linked (Glycyl lysine isopeptide (Lys-Gly) (interchain with G-Cter in SUMO1); alternate). Residue Lys748 forms a Glycyl lysine isopeptide (Lys-Gly) (interchain with G-Cter in SUMO2); alternate linkage. Phosphoserine occurs at positions 782 and 786. A PARP catalytic domain is found at 788-1014; the sequence is DPIDVNYEKL…LKFNFKTSLW (227 aa). NAD(+)-binding positions include 862-864, Gly871, Arg878, and Ser904; that span reads HGS. Glu988 functions as the For poly [ADP-ribose] polymerase activity in the catalytic mechanism.

It belongs to the ARTD/PARP family. As to quaternary structure, homodimer; PARP-type zinc-fingers from separate PARP1 molecules form a dimer module that specifically recognizes DNA strand breaks. Heterodimer; heterodimerizes with PARP2. Interacts (via the PARP catalytic domain) with HPF1. Interacts with NMNAT1. Interacts with nucleosomes; with a preference for nucleosomes containing H2A.X. Interacts with APTX. Component of a base excision repair (BER) complex, containing at least XRCC1, PARP1, PARP2, POLB and LRIG3. Interacts with SRY. The SWAP complex consists of NPM1, NCL, PARP1 and SWAP70. Interacts with TIAM2. Interacts with PARP3; leading to activate PARP1 in absence of DNA. Interacts (when poly-ADP-ribosylated) with CHD1L (via macro domain). Interacts with the DNA polymerase alpha catalytic subunit POLA1; this interaction functions as part of the control of replication fork progression. Interacts with EEF1A1 and TXK. Interacts with RNF4. Interacts with RNF146. Interacts with ZNF423. Interacts with APLF. Interacts with SNAI1 (via zinc fingers); the interaction requires SNAI1 to be poly-ADP-ribosylated and non-phosphorylated (active) by GSK3B. Interacts (when poly-ADP-ribosylated) with PARP9. Interacts with NR4A3; activates PARP1 by improving acetylation of PARP1 and suppressing the interaction between PARP1 and SIRT1. Interacts (via catalytic domain) with PUM3; the interaction inhibits the poly-ADP-ribosylation activity of PARP1 and the degradation of PARP1 by CASP3 following genotoxic stress. Interacts with ZNF365. Interacts with RRP1B. Interacts with TIMELESS; the interaction is direct. Interacts with CGAS; leading to impede the formation of the PARP1-TIMELESS complex. Interacts with KHDC3L, the interaction is increased following the formation of DNA double-strand breaks. Interacts (when auto-poly-ADP-ribosylated) with XRCC1; leading to inhibit PARP1 ADP-ribosyltransferase activity. Interacts with SPINDOC; promoting PARP1 ADP-ribosyltransferase activity. Interacts with BANF1; leading to inhibit PARP1 ADP-ribosyltransferase activity in response to oxidative DNA damage. Interacts (when sumoylated and ubiquitinated) with VCP/p97; leading to its extraction from chromatin. Interacts with YARS1; Interacts with PACMP micropeptide; interaction. Interacts with PACMP micropeptide; Interacts with PACMP micropeptide; interaction. Interacts (when poly-ADP-ribosylated) with isoform 1 of MACROH2A1; MACROH2A1 specifically binds to poly-ADP-ribose chains and inhibits PARP1 activity, limiting the consumption of nuclear NAD(+). Interacts with CARM1; promoting recruitment to replication forks. Interacts with RECQL. Interacts with ZNF32; the interaction reshapes ZNF432 interacting proteins. Interacts with TPRN; TPRN interacts with a number of DNA damage response proteins, is recruited to sites of DNA damage and may play a role in DNA damage repair. Interacts (when auto-poly-ADP-ribosylated) with AIFM1. In terms of assembly, (Microbial infection) Interacts with human herpesvirus 8 (KSHV) protein RTA/ORF50; this interaction negatively regulates RTA/ORF50 transactivation activity. Poly-ADP-ribosylated on serine, glutamate and aspartate residues by autocatalysis. Auto-ADP-ribosylation on serine takes place following interaction with HPF1. Auto poly-ADP-ribosylation on serine residues promotes its dissociation from chromatin. Poly-ADP-ribosylated by PARP2; poly-ADP-ribosylation mediates the recruitment of CHD1L to DNA damage sites. Mono-ADP-ribosylated at Lys-521 by SIRT6 in response to oxidative stress, promoting recruitment to double-strand breaks (DSBs) sites. In terms of processing, phosphorylated at Thr-594 by PRKDC in response to DNA damage following virus infection, promoting its translocation to the cytosol. Phosphorylated by TXK. Post-translationally, S-nitrosylated, leading to inhibit transcription regulation activity. Proteolytically cleaved by caspase-3 (CASP3) and caspase-7 (CASP7) in response to apoptosis to generate the Poly [ADP-ribose] polymerase 1, processed N-terminus and Poly [ADP-ribose] polymerase 1, processed C-terminus forms. CASP3-mediated cleavage is promoted by the TP53/p53-induced long non-coding RNA SPARCLE, which binds PARP1 in response to genotoxic stress. In terms of processing, sumoylated with SUMO1 or SUMO2 by PIAS4 following prolonged residence (trapping) to chromatin. Sumoylation promotes ubiquitination by RNF4 and removal from chromatin by VCP/p97. Post-translationally, ubiquitinated by RNF4 following sumoylation by PIAS4 in response to prolonged residence (trapping) to chromatin. Ubiquitination promotes removal from chromatin by VCP/p97.

It localises to the chromosome. Its subcellular location is the nucleus. It is found in the nucleolus. The protein localises to the cytoplasm. The protein resides in the cytosol. It carries out the reaction NAD(+) + (ADP-D-ribosyl)n-acceptor = nicotinamide + (ADP-D-ribosyl)n+1-acceptor + H(+).. The catalysed reaction is L-seryl-[protein] + NAD(+) = O-(ADP-D-ribosyl)-L-seryl-[protein] + nicotinamide + H(+). It catalyses the reaction L-aspartyl-[protein] + NAD(+) = 4-O-(ADP-D-ribosyl)-L-aspartyl-[protein] + nicotinamide. The enzyme catalyses L-glutamyl-[protein] + NAD(+) = 5-O-(ADP-D-ribosyl)-L-glutamyl-[protein] + nicotinamide. It carries out the reaction L-tyrosyl-[protein] + NAD(+) = O-(ADP-D-ribosyl)-L-tyrosyl-[protein] + nicotinamide + H(+). The catalysed reaction is L-histidyl-[protein] + NAD(+) = N(tele)-(ADP-D-ribosyl)-L-histidyl-[protein] + nicotinamide + H(+). With respect to regulation, ADP-ribosyltransferase activity is regulated via an allosteric activation mechanism. In absence of activation signal, PARP1 is autoinhibited by the PARP alpha-helical domain (also named HD region), which prevents effective NAD(+)-binding. Activity is highly stimulated by signals, such as DNA strand breaks. Binding to damaged DNA unfolds the PARP alpha-helical domain, relieving autoinhibition. Poly-ADP-ribosyltransferase activity is tightly regulated and PARP1 is removed from damaged chromatin following initial poly-ADP-ribosylation of chromatin to avoid prolonged residence (trapping) that has cytotoxic consequences. A number of factors (VCP/p97) or post-translational modifications (auto-poly-ADP-ribosylation or ubiquitination) promote PARP1 removal from chromatin. ADP-ribosyltransferase activity is inhibited by a number of PARP inhibitors (PARPi) compounds, that are used the treatment of breast or ovarian cancers that have defects in DNA repair by homologous recombination. PARPi molecules can be classified in three categories: type I compounds (EB-47, UKTT15 and BAD) that promote allosteric retention of PARP1 on DNA, type II inhibitors (talazoparib and olaparib) that mediate a non-allosteric inhibition, and type III inhibitors (rucaparib, niraparib, and veliparib) that promote allosteric release from DNA. Trapping to chromatin by PARPi molecules triggers activation of the cGAS-STING pathway. In terms of biological role, poly-ADP-ribosyltransferase that mediates poly-ADP-ribosylation of proteins and plays a key role in DNA repair. Mediates glutamate, aspartate, serine, histidine or tyrosine ADP-ribosylation of proteins: the ADP-D-ribosyl group of NAD(+) is transferred to the acceptor carboxyl group of target residues and further ADP-ribosyl groups are transferred to the 2'-position of the terminal adenosine moiety, building up a polymer with an average chain length of 20-30 units. Serine ADP-ribosylation of proteins constitutes the primary form of ADP-ribosylation of proteins in response to DNA damage. Specificity for the different amino acids is conferred by interacting factors, such as HPF1 and NMNAT1. Following interaction with HPF1, catalyzes serine ADP-ribosylation of target proteins; HPF1 confers serine specificity by completing the PARP1 active site. Also catalyzes tyrosine ADP-ribosylation of target proteins following interaction with HPF1. Following interaction with NMNAT1, catalyzes glutamate and aspartate ADP-ribosylation of target proteins; NMNAT1 confers glutamate and aspartate specificity. PARP1 initiates the repair of DNA breaks: recognizes and binds DNA breaks within chromatin and recruits HPF1, licensing serine ADP-ribosylation of target proteins, such as histones (H2BS6ADPr and H3S10ADPr), thereby promoting decompaction of chromatin and the recruitment of repair factors leading to the reparation of DNA strand breaks. HPF1 initiates serine ADP-ribosylation but restricts the polymerase activity of PARP1 in order to limit the length of poly-ADP-ribose chains. In addition to base excision repair (BER) pathway, also involved in double-strand breaks (DSBs) repair: together with TIMELESS, accumulates at DNA damage sites and promotes homologous recombination repair by mediating poly-ADP-ribosylation. Mediates the poly-ADP-ribosylation of a number of proteins, including itself, APLF, CHFR, RPA1 and NFAT5. In addition to proteins, also able to ADP-ribosylate DNA: catalyzes ADP-ribosylation of DNA strand break termini containing terminal phosphates and a 2'-OH group in single- and double-stranded DNA, respectively. Required for PARP9 and DTX3L recruitment to DNA damage sites. PARP1-dependent PARP9-DTX3L-mediated ubiquitination promotes the rapid and specific recruitment of 53BP1/TP53BP1, UIMC1/RAP80, and BRCA1 to DNA damage sites. PARP1-mediated DNA repair in neurons plays a role in sleep: senses DNA damage in neurons and promotes sleep, facilitating efficient DNA repair. In addition to DNA repair, also involved in other processes, such as transcription regulation, programmed cell death, membrane repair, adipogenesis and innate immunity. Acts as a repressor of transcription: binds to nucleosomes and modulates chromatin structure in a manner similar to histone H1, thereby altering RNA polymerase II. Acts both as a positive and negative regulator of transcription elongation, depending on the context. Acts as a positive regulator of transcription elongation by mediating poly-ADP-ribosylation of NELFE, preventing RNA-binding activity of NELFE and relieving transcription pausing. Acts as a negative regulator of transcription elongation in response to DNA damage by catalyzing poly-ADP-ribosylation of CCNT1, disrupting the phase separation activity of CCNT1 and subsequent activation of CDK9. Involved in replication fork progression following interaction with CARM1: mediates poly-ADP-ribosylation at replication forks, slowing fork progression. Poly-ADP-ribose chains generated by PARP1 also play a role in poly-ADP-ribose-dependent cell death, a process named parthanatos. Also acts as a negative regulator of the cGAS-STING pathway. Acts by mediating poly-ADP-ribosylation of CGAS: PARP1 translocates into the cytosol following phosphorylation by PRKDC and catalyzes poly-ADP-ribosylation and inactivation of CGAS. Acts as a negative regulator of adipogenesis: catalyzes poly-ADP-ribosylation of histone H2B on 'Glu-35' (H2BE35ADPr) following interaction with NMNAT1, inhibiting phosphorylation of H2B at 'Ser-36' (H2BS36ph), thereby blocking expression of pro-adipogenetic genes. Involved in the synthesis of ATP in the nucleus, together with NMNAT1, PARG and NUDT5. Nuclear ATP generation is required for extensive chromatin remodeling events that are energy-consuming. Functionally, promotes AIFM1-mediated apoptosis. This form, which translocates into the cytoplasm following cleavage by caspase-3 (CASP3) and caspase-7 (CASP7) in response to apoptosis, is auto-poly-ADP-ribosylated and serves as a poly-ADP-ribose carrier to induce AIFM1-mediated apoptosis. Its function is as follows. This cleavage form irreversibly binds to DNA breaks and interferes with DNA repair, promoting DNA damage-induced apoptosis. The protein is Poly [ADP-ribose] polymerase 1 of Homo sapiens (Human).